Here is a 335-residue protein sequence, read N- to C-terminus: DNA-directed RNA polymerase subunit alpha (335 aa).

Positions 1 to 233 are alpha N-terminal domain (alpha-NTD); sequence MQRNWRELIK…DQLTIFINFE (233 aa). The segment at 249–335 is alpha C-terminal domain (alpha-CTD); that stretch reads FNDHLFRSVD…DIENRRKEQE (87 aa).

This sequence belongs to the RNA polymerase alpha chain family. In terms of assembly, homodimer. The RNAP catalytic core consists of 2 alpha, 1 beta, 1 beta' and 1 omega subunit. When a sigma factor is associated with the core the holoenzyme is formed, which can initiate transcription.

The enzyme catalyses RNA(n) + a ribonucleoside 5'-triphosphate = RNA(n+1) + diphosphate. Functionally, DNA-dependent RNA polymerase catalyzes the transcription of DNA into RNA using the four ribonucleoside triphosphates as substrates. This chain is DNA-directed RNA polymerase subunit alpha, found in Syntrophobacter fumaroxidans (strain DSM 10017 / MPOB).